Consider the following 246-residue polypeptide: uncharacterized protein (246 aa).

The protein belongs to the IIV-6 170L family.

This is an uncharacterized protein from Acheta domesticus (House cricket).